Consider the following 84-residue polypeptide: Dolichol phosphate-mannose biosynthesis regulatory protein (84 aa).

The next 2 membrane-spanning stretches (helical) occupy residues 11–31 (LGLV…VILL) and 49–69 (YAIA…GIFI).

Belongs to the DPM2 family. As to quaternary structure, component of the dolichol-phosphate mannose (DPM) synthase complex composed of DPM1, DPM2 and DPM3; in the complex interacts directly with DPM3. Component of the glycosylphosphatidylinositol-N-acetylglucosaminyltransferase (GPI-GnT) complex composed at least by PIGA, PIGC, PIGH, PIGP, PIGQ, PIGY and DPM2. Interacts with PIGA, PIGC and PIGQ.

It localises to the endoplasmic reticulum membrane. It participates in protein modification; protein glycosylation. Functionally, regulates the biosynthesis of dolichol phosphate-mannose. Regulatory subunit of the dolichol-phosphate mannose (DPM) synthase complex; essential for the ER localization and stable expression of DPM1. Part of the glycosylphosphatidylinositol-N-acetylglucosaminyltransferase (GPI-GnT) complex that catalyzes the transfer of N-acetylglucosamine from UDP-N-acetylglucosamine to phosphatidylinositol and participates in the first step of GPI biosynthesis. May act by regulating the GPI-GNT complex. The polypeptide is Dolichol phosphate-mannose biosynthesis regulatory protein (Bos taurus (Bovine)).